Consider the following 84-residue polypeptide: Sporulation-specific transcription factor SpoVIF (84 aa).

It localises to the cytoplasm. Functionally, transcription factor involved in spore coat assembly and spore resistance. Required for gene regulation during the latter stages of sporulation. Regulates the transcription of at least cgeA, cotG and cotS. May directly or indirectly control the function of the GerE protein. The sequence is that of Sporulation-specific transcription factor SpoVIF from Bacillus subtilis (strain 168).